The primary structure comprises 385 residues: Polyketide synthase 3 (385 aa).

Cys-157 is a catalytic residue.

The protein belongs to the thiolase-like superfamily. Chalcone/stilbene synthases family. As to expression, expressed in male and female flowers, and seedlings.

The protein resides in the cytoplasm. In terms of biological role, polyketide synthase responsible for the biosynthesis of secondary metabolites. This is Polyketide synthase 3 (PKSF3) from Cannabis sativa (Hemp).